A 459-amino-acid polypeptide reads, in one-letter code: Zinc finger chaperone zpr1 (459 aa).

2 consecutive C4-type zinc fingers follow at residues 38–70 (CMEC…CPHC) and 259–291 (CPSC…CDRC).

Belongs to the ZPR1 family.

The protein resides in the cytoplasm. It localises to the nucleus. Acts as a protein folding chaperone for elongation factor 1-alpha. This Schizosaccharomyces pombe (strain 972 / ATCC 24843) (Fission yeast) protein is Zinc finger chaperone zpr1.